The chain runs to 286 residues: 4-diphosphocytidyl-2-C-methyl-D-erythritol kinase (286 aa).

Lys-11 is an active-site residue. 94-104 lines the ATP pocket; it reads PMGGGIGGGSS. Asp-136 is an active-site residue.

Belongs to the GHMP kinase family. IspE subfamily.

The catalysed reaction is 4-CDP-2-C-methyl-D-erythritol + ATP = 4-CDP-2-C-methyl-D-erythritol 2-phosphate + ADP + H(+). It functions in the pathway isoprenoid biosynthesis; isopentenyl diphosphate biosynthesis via DXP pathway; isopentenyl diphosphate from 1-deoxy-D-xylulose 5-phosphate: step 3/6. Its function is as follows. Catalyzes the phosphorylation of the position 2 hydroxy group of 4-diphosphocytidyl-2C-methyl-D-erythritol. In Pseudomonas putida (strain W619), this protein is 4-diphosphocytidyl-2-C-methyl-D-erythritol kinase.